The sequence spans 474 residues: N-lysine methyltransferase SETD6 (474 aa).

Serine 14 is subject to Phosphoserine. Residues 63-287 (PKVLVSRQGT…KGHEIFNTYG (225 aa)) enclose the SET domain. Lysine 64 is modified (N6-methylated lysine; by autocatalysis). S-adenosyl-L-methionine is bound at residue 74-76 (AGY). Tryptophan 123 provides a ligand contact to substrate. At lysine 180 the chain carries N6-methylated lysine; by autocatalysis. Tyrosine 224 contacts S-adenosyl-L-methionine. Residues serine 225 and glutamine 227 each contribute to the substrate site. S-adenosyl-L-methionine is bound by residues 252-253 (NH) and tyrosine 298. N6-methylated lysine; by autocatalysis is present on lysine 373.

It belongs to the class V-like SAM-binding methyltransferase superfamily. Histone-lysine methyltransferase family. SETD6 subfamily. Monomer, homodimer and homotrimer; these structures are stabilized in the presence of S-adenosyl-L-methionine (SAM). Automethylated.

The protein resides in the nucleus. It carries out the reaction L-lysyl-[protein] + S-adenosyl-L-methionine = N(6)-methyl-L-lysyl-[protein] + S-adenosyl-L-homocysteine + H(+). The catalysed reaction is L-lysyl(8)-[histone H2AZ] + S-adenosyl-L-methionine = N(6)-methyl-L-lysyl(8)-[histone H2AZ] + S-adenosyl-L-homocysteine + H(+). Protein-lysine N-methyltransferase. Monomethylates 'Lys-310' of the RELA subunit of NF-kappa-B complex, leading to down-regulation of NF-kappa-B transcription factor activity. Monomethylates 'Lys-8' of H2AZ (H2AZK8me1). Required for the maintenance of embryonic stem cell self-renewal. Methylates PAK4. This chain is N-lysine methyltransferase SETD6 (Setd6), found in Rattus norvegicus (Rat).